The primary structure comprises 427 residues: 4-hydroxy-3-methylbut-2-en-1-yl diphosphate synthase (flavodoxin) (427 aa).

The segment at 1–21 is disordered; it reads MNKLENTIDSDIAGPAPRHRT. Residues Cys310, Cys313, Cys356, and Glu363 each coordinate [4Fe-4S] cluster.

The protein belongs to the IspG family. [4Fe-4S] cluster is required as a cofactor.

It carries out the reaction (2E)-4-hydroxy-3-methylbut-2-enyl diphosphate + oxidized [flavodoxin] + H2O + 2 H(+) = 2-C-methyl-D-erythritol 2,4-cyclic diphosphate + reduced [flavodoxin]. Its pathway is isoprenoid biosynthesis; isopentenyl diphosphate biosynthesis via DXP pathway; isopentenyl diphosphate from 1-deoxy-D-xylulose 5-phosphate: step 5/6. Converts 2C-methyl-D-erythritol 2,4-cyclodiphosphate (ME-2,4cPP) into 1-hydroxy-2-methyl-2-(E)-butenyl 4-diphosphate. The sequence is that of 4-hydroxy-3-methylbut-2-en-1-yl diphosphate synthase (flavodoxin) from Bradyrhizobium diazoefficiens (strain JCM 10833 / BCRC 13528 / IAM 13628 / NBRC 14792 / USDA 110).